The following is a 156-amino-acid chain: Melatonin receptor type 1A (156 aa).

3 consecutive transmembrane segments (helical) span residues 19–39, 62–82, and 115–135; these read LCYVFLIWTLTLIAIMPNLQT, TIALVVFHFVVPMIIVTFCYL, and FVVFVLFALCWAPLNFIGLIV.

Belongs to the G-protein coupled receptor 1 family. At least in the brain, more precisely in the pars tuberalis and the suprachiasmatic nucleus.

The protein resides in the cell membrane. Its function is as follows. High affinity receptor for melatonin. Likely to mediate the reproductive and circadian actions of melatonin. The activity of this receptor is mediated by pertussis toxin sensitive G proteins that inhibit adenylate cyclase activity. Possibly involved in sleep induction, by melatonin activation of the potassium channel KCNMA1/BK and the dissociation of G-beta and G-gamma subunits, thereby decreasing synaptic transmission. This is Melatonin receptor type 1A (Mtnr1a) from Rattus norvegicus (Rat).